Here is a 309-residue protein sequence, read N- to C-terminus: 2-phosphoglycerate kinase (309 aa).

One can recognise an ATP-cone domain in the interval Asn-5 to Pro-92.

This sequence belongs to the 2-phosphoglycerate kinase family. A divalent metal cation serves as cofactor.

The enzyme catalyses (2R)-2-phosphoglycerate + ATP = (2R)-2,3-bisphosphoglycerate + ADP + H(+). Its pathway is thermoadapter biosynthesis; cyclic 2,3-diphosphoglycerate biosynthesis; cyclic 2,3-diphosphoglycerate from 2-phospho-D-glycerate: step 1/2. Functionally, catalyzes the phosphorylation of 2-phosphoglycerate to 2,3-diphosphoglycerate. Involved in the biosynthesis of cyclic 2,3-bisphosphoglycerate, a thermoprotectant. The sequence is that of 2-phosphoglycerate kinase from Methanocaldococcus jannaschii (strain ATCC 43067 / DSM 2661 / JAL-1 / JCM 10045 / NBRC 100440) (Methanococcus jannaschii).